Reading from the N-terminus, the 437-residue chain is Methylenetetrahydrofolate--tRNA-(uracil-5-)-methyltransferase TrmFO (437 aa).

10 to 15 (GAGLAG) contacts FAD.

The protein belongs to the MnmG family. TrmFO subfamily. The cofactor is FAD.

The protein resides in the cytoplasm. The enzyme catalyses uridine(54) in tRNA + (6R)-5,10-methylene-5,6,7,8-tetrahydrofolate + NADH + H(+) = 5-methyluridine(54) in tRNA + (6S)-5,6,7,8-tetrahydrofolate + NAD(+). It catalyses the reaction uridine(54) in tRNA + (6R)-5,10-methylene-5,6,7,8-tetrahydrofolate + NADPH + H(+) = 5-methyluridine(54) in tRNA + (6S)-5,6,7,8-tetrahydrofolate + NADP(+). Its function is as follows. Catalyzes the folate-dependent formation of 5-methyl-uridine at position 54 (M-5-U54) in all tRNAs. The sequence is that of Methylenetetrahydrofolate--tRNA-(uracil-5-)-methyltransferase TrmFO from Brevibacillus brevis (strain 47 / JCM 6285 / NBRC 100599).